A 213-amino-acid polypeptide reads, in one-letter code: tRNA (guanine-N(7)-)-methyltransferase (213 aa).

Glutamate 44, glutamate 69, aspartate 96, and aspartate 118 together coordinate S-adenosyl-L-methionine. Residue aspartate 118 is part of the active site. Substrate contacts are provided by residues lysine 122, aspartate 154, and 192–195; that span reads TEYE.

The protein belongs to the class I-like SAM-binding methyltransferase superfamily. TrmB family.

It catalyses the reaction guanosine(46) in tRNA + S-adenosyl-L-methionine = N(7)-methylguanosine(46) in tRNA + S-adenosyl-L-homocysteine. Its pathway is tRNA modification; N(7)-methylguanine-tRNA biosynthesis. In terms of biological role, catalyzes the formation of N(7)-methylguanine at position 46 (m7G46) in tRNA. In Limosilactobacillus reuteri (strain DSM 20016) (Lactobacillus reuteri), this protein is tRNA (guanine-N(7)-)-methyltransferase.